We begin with the raw amino-acid sequence, 492 residues long: Putative BTB/POZ domain and WD-repeat protein R786 (492 aa).

Residues 16 to 86 (TDVEIVLIDE…FYGQIVDSTN (71 aa)) enclose the BTB domain. 2 WD repeats span residues 241–281 (QSSC…IKIK) and 286–325 (LINR…SKGI).

The protein belongs to the mimivirus BTB/WD family.

The chain is Putative BTB/POZ domain and WD-repeat protein R786 from Acanthamoeba polyphaga (Amoeba).